The following is a 420-amino-acid chain: Glutamate-1-semialdehyde 2,1-aminomutase (420 aa).

Lysine 259 is modified (N6-(pyridoxal phosphate)lysine).

The protein belongs to the class-III pyridoxal-phosphate-dependent aminotransferase family. HemL subfamily. In terms of assembly, homodimer. Requires pyridoxal 5'-phosphate as cofactor.

It localises to the cytoplasm. The enzyme catalyses (S)-4-amino-5-oxopentanoate = 5-aminolevulinate. It participates in porphyrin-containing compound metabolism; protoporphyrin-IX biosynthesis; 5-aminolevulinate from L-glutamyl-tRNA(Glu): step 2/2. This is Glutamate-1-semialdehyde 2,1-aminomutase from Nautilia profundicola (strain ATCC BAA-1463 / DSM 18972 / AmH).